Reading from the N-terminus, the 74-residue chain is UPF0057 membrane protein At4g30660 (74 aa).

The next 2 helical transmembrane spans lie at 4–24 (NCEI…GVCF) and 37–57 (LVLT…VIVF).

It belongs to the UPF0057 (PMP3) family.

The protein resides in the membrane. The sequence is that of UPF0057 membrane protein At4g30660 from Arabidopsis thaliana (Mouse-ear cress).